The chain runs to 433 residues: Enolase (433 aa).

Gln167 is a (2R)-2-phosphoglycerate binding site. Glu209 serves as the catalytic Proton donor. Mg(2+)-binding residues include Asp246, Glu291, and Asp318. Residues Lys343, Arg372, Ser373, and Lys394 each contribute to the (2R)-2-phosphoglycerate site. Lys343 functions as the Proton acceptor in the catalytic mechanism.

The protein belongs to the enolase family. As to quaternary structure, component of the RNA degradosome, a multiprotein complex involved in RNA processing and mRNA degradation. The cofactor is Mg(2+).

The protein resides in the cytoplasm. It is found in the secreted. It localises to the cell surface. The enzyme catalyses (2R)-2-phosphoglycerate = phosphoenolpyruvate + H2O. Its pathway is carbohydrate degradation; glycolysis; pyruvate from D-glyceraldehyde 3-phosphate: step 4/5. Catalyzes the reversible conversion of 2-phosphoglycerate (2-PG) into phosphoenolpyruvate (PEP). It is essential for the degradation of carbohydrates via glycolysis. The chain is Enolase from Shewanella piezotolerans (strain WP3 / JCM 13877).